Reading from the N-terminus, the 245-residue chain is 7-cyano-7-deazaguanine synthase (245 aa).

Phe-19 to Leu-29 contacts ATP. Zn(2+)-binding residues include Cys-207, Cys-222, Cys-225, and Cys-228.

This sequence belongs to the QueC family. Zn(2+) serves as cofactor.

It carries out the reaction 7-carboxy-7-deazaguanine + NH4(+) + ATP = 7-cyano-7-deazaguanine + ADP + phosphate + H2O + H(+). The protein operates within purine metabolism; 7-cyano-7-deazaguanine biosynthesis. In terms of biological role, catalyzes the ATP-dependent conversion of 7-carboxy-7-deazaguanine (CDG) to 7-cyano-7-deazaguanine (preQ(0)). The polypeptide is 7-cyano-7-deazaguanine synthase (Gluconacetobacter diazotrophicus (strain ATCC 49037 / DSM 5601 / CCUG 37298 / CIP 103539 / LMG 7603 / PAl5)).